Here is a 311-residue protein sequence, read N- to C-terminus: 5'-adenylylsulfate reductase-like 3 (311 aa).

The signal sequence occupies residues 1–22 (MATRLLCWTALLLPIIAATAAA). The Thioredoxin domain occupies 23–164 (SPLPEACPVP…LAAFYRDVSG (142 aa)). The N-linked (GlcNAc...) asparagine glycan is linked to N139. The chain crosses the membrane as a helical span at residues 210 to 230 (LALATAFVILRLLYLLFPKIG). N-linked (GlcNAc...) asparagine glycans are attached at residues N281 and N305.

It localises to the membrane. The polypeptide is 5'-adenylylsulfate reductase-like 3 (APRL3) (Oryza sativa subsp. japonica (Rice)).